A 307-amino-acid chain; its full sequence is Ribonuclease Z (307 aa).

Residues H61, H63, D65, H66, H138, D207, and H265 each coordinate Zn(2+). D65 serves as the catalytic Proton acceptor.

Belongs to the RNase Z family. As to quaternary structure, homodimer. Zn(2+) is required as a cofactor.

It carries out the reaction Endonucleolytic cleavage of RNA, removing extra 3' nucleotides from tRNA precursor, generating 3' termini of tRNAs. A 3'-hydroxy group is left at the tRNA terminus and a 5'-phosphoryl group is left at the trailer molecule.. In terms of biological role, zinc phosphodiesterase, which displays some tRNA 3'-processing endonuclease activity. Probably involved in tRNA maturation, by removing a 3'-trailer from precursor tRNA. The polypeptide is Ribonuclease Z (Methanothermobacter thermautotrophicus (strain ATCC 29096 / DSM 1053 / JCM 10044 / NBRC 100330 / Delta H) (Methanobacterium thermoautotrophicum)).